Reading from the N-terminus, the 283-residue chain is Peroxisomal membrane protein PEX18 (283 aa).

Positions 179–201 (SSLEEDVHTEEENSGTSLEDEET) are disordered. Positions 180-200 (SLEEDVHTEEENSGTSLEDEE) are enriched in acidic residues.

As to quaternary structure, interacts with PEX7; The interaction with PEX7 stabilizes PEX18. Interacts with PEX13. In terms of processing, ubiquitinated in a UBC4/UBC5 dependent manner.

The protein localises to the cytoplasm. It localises to the peroxisome membrane. In terms of biological role, involved in peroxisome biogenesis and the import of peroxisomal matrix proteins that contain the peroxisomal targeting sequence PTS2. Required for peroxisomal targeting of PEX7 and growth on oleate. This chain is Peroxisomal membrane protein PEX18 (PEX18), found in Saccharomyces cerevisiae (strain ATCC 204508 / S288c) (Baker's yeast).